The following is a 392-amino-acid chain: HCLS1-binding protein 3 (392 aa).

Methionine 1 is subject to N-acetylmethionine. Phosphoserine is present on residues serine 3, serine 139, and serine 194. Residues 19–142 form the PX domain; sequence GLDLTVPQHQ…EFLGTRSPGA (124 aa). Disordered stretches follow at residues 138-162, 174-265, and 319-364; these read RSPG…QTGN, DQVA…PLKL, and GAEP…KPQE. A compositionally biased stretch (acidic residues) spans 190-201; sequence DAEESLEEEEAL. Positions 208-220 are enriched in basic residues; that stretch reads RSKKPKKHPKVAV. Serine 249 carries the phosphoserine modification. Residues 325 to 335 are compositionally biased toward pro residues; the sequence is KPQLKPKPPVA. Position 337 is an N6-acetyllysine (lysine 337).

Binds HCLS1. Interacts with the SH3 domain of HCLS1 in vitro.

In terms of biological role, may be a modulator of IL-2 signaling. The chain is HCLS1-binding protein 3 (HS1BP3) from Homo sapiens (Human).